We begin with the raw amino-acid sequence, 47 residues long: uncharacterized protein (47 aa).

A helical transmembrane segment spans residues 28 to 45 (VMIWGCLPYFLYVLIRMF).

The protein localises to the cell membrane. This is an uncharacterized protein from Bacillus subtilis (strain 168).